A 510-amino-acid chain; its full sequence is Cytochrome P450 703A2 (510 aa).

The helical transmembrane segment at 2-22 threads the bilayer; that stretch reads ILVLASLFAVLILNVLLWRWL. Position 451 (Cys451) interacts with heme.

The protein belongs to the cytochrome P450 family. Heme serves as cofactor.

It localises to the membrane. It carries out the reaction dodecanoate + reduced [NADPH--hemoprotein reductase] + O2 = 7-hydroxydodecanoate + oxidized [NADPH--hemoprotein reductase] + H2O + H(+). Functionally, involved in pollen wall development. Catalyzes the conversion of medium-chain saturated fatty acids to the corresponding monohydroxylated fatty acids, with a preferential hydroxylation of lauric acid at the C-7 position. In-chain hydroxylated fatty acids, together with omega-hydroxylated fatty acids, are key monomeric aliphatic building blocks for sporopollenin synthesis during exine formation. This Arabidopsis thaliana (Mouse-ear cress) protein is Cytochrome P450 703A2.